The following is a 273-amino-acid chain: Proteasome subunit alpha (273 aa).

Residues 231-273 (DDGAAGQPPSSSDTDTSAAEARKPTASAGSADLEGPEPERPDS) are disordered. The span at 238–249 (PPSSSDTDTSAA) shows a compositional bias: low complexity.

The protein belongs to the peptidase T1A family. The 20S proteasome core is composed of 14 alpha and 14 beta subunits that assemble into four stacked heptameric rings, resulting in a barrel-shaped structure. The two inner rings, each composed of seven catalytic beta subunits, are sandwiched by two outer rings, each composed of seven alpha subunits. The catalytic chamber with the active sites is on the inside of the barrel. Has a gated structure, the ends of the cylinder being occluded by the N-termini of the alpha-subunits. Is capped by the proteasome-associated ATPase, ARC.

The protein localises to the cytoplasm. It participates in protein degradation; proteasomal Pup-dependent pathway. Its activity is regulated as follows. The formation of the proteasomal ATPase ARC-20S proteasome complex, likely via the docking of the C-termini of ARC into the intersubunit pockets in the alpha-rings, may trigger opening of the gate for substrate entry. Interconversion between the open-gate and close-gate conformations leads to a dynamic regulation of the 20S proteasome proteolysis activity. Component of the proteasome core, a large protease complex with broad specificity involved in protein degradation. The polypeptide is Proteasome subunit alpha (Salinispora arenicola (strain CNS-205)).